A 270-amino-acid chain; its full sequence is uncharacterized protein (270 aa).

Residues 1–23 (MKKLLIILAATLVLVLGSSGNFR) form the signal peptide.

This is an uncharacterized protein from Archaeoglobus fulgidus (strain ATCC 49558 / DSM 4304 / JCM 9628 / NBRC 100126 / VC-16).